Here is a 613-residue protein sequence, read N- to C-terminus: Serine/threonine-protein kinase pkpA (613 aa).

Residues Ser17–Leu269 enclose the Protein kinase domain. Residues Leu23–Val31 and Lys50 each bind ATP. Asp140 acts as the Proton acceptor in catalysis. Disordered regions lie at residues Leu424 to Leu475 and Val589 to Met613. Over residues Gln427–Gln441 the composition is skewed to pro residues. Positions Pro442–Leu475 are enriched in low complexity. A compositionally biased stretch (polar residues) spans Arg592–Ser602.

It belongs to the protein kinase superfamily. Ser/Thr protein kinase family.

The catalysed reaction is L-seryl-[protein] + ATP = O-phospho-L-seryl-[protein] + ADP + H(+). It catalyses the reaction L-threonyl-[protein] + ATP = O-phospho-L-threonyl-[protein] + ADP + H(+). Its function is as follows. Serine/threonine protein kinase that probably participates as an intermediate in an intracellular system controlling nuclear proliferation. This Phycomyces blakesleeanus (strain ATCC 8743b / DSM 1359 / FGSC 10004 / NBRC 33097 / NRRL 1555) protein is Serine/threonine-protein kinase pkpA (pkpA).